The following is a 249-amino-acid chain: MMAGRKGYQSVMDENCHDKTESAYTDDRSLNGSSGSSCLKNNVIAFFLGAAVVAATQYVSIDSSLTKAVEVTSFTTSDAPAIDIAINPTRPSLDARQDFKIEGWGNQTRNDGWPSFHFEVFHFCPHLINFMYENQVHPQSRVDPSNVIYDAQHPGALAEDGFAEVLQQTLPKFYDYPVGYRLNDRPAEISAYWTLHMRIARGSEDSQWHDFASSLPEGINRIYVKKPLQWNGDHVTLFSSQTGYNILVY.

In terms of biological role, unknown function: part of the gene cluster that mediates the biosynthesis of domoic acid (DA) and derivatives, natural products with neurochemical activity acting as ionotropic glutamate receptor (iGluR) agonists, thus being neurotoxins causing amnesic shellfish poisoning (ASP). This Pseudo-nitzschia multiseries (Marine planktonic diatom) protein is Domoic acid biosynthesis cluster protein B.